Consider the following 251-residue polypeptide: Hydroxyacylglutathione hydrolase (251 aa).

Zn(2+) is bound by residues His53, His55, Asp57, His58, His110, Asp127, and His165.

The protein belongs to the metallo-beta-lactamase superfamily. Glyoxalase II family. In terms of assembly, monomer. Requires Zn(2+) as cofactor.

The enzyme catalyses an S-(2-hydroxyacyl)glutathione + H2O = a 2-hydroxy carboxylate + glutathione + H(+). It participates in secondary metabolite metabolism; methylglyoxal degradation; (R)-lactate from methylglyoxal: step 2/2. Its function is as follows. Thiolesterase that catalyzes the hydrolysis of S-D-lactoyl-glutathione to form glutathione and D-lactic acid. The sequence is that of Hydroxyacylglutathione hydrolase from Edwardsiella ictaluri (strain 93-146).